The following is a 311-amino-acid chain: Glutaminase (311 aa).

Substrate contacts are provided by serine 66, asparagine 116, glutamate 162, asparagine 169, tyrosine 193, tyrosine 245, and valine 263.

This sequence belongs to the glutaminase family. Homotetramer.

The enzyme catalyses L-glutamine + H2O = L-glutamate + NH4(+). The sequence is that of Glutaminase from Rhodopseudomonas palustris (strain BisB5).